Reading from the N-terminus, the 1199-residue chain is Chromosome partition protein Smc (1199 aa).

32–39 (PNGSGKSN) contributes to the ATP binding site. A coiled-coil region spans residues 192-528 (GVAEFDEKSE…NARIKTLKDM (337 aa)). One can recognise an SMC hinge domain in the interval 546 to 658 (PGVVDIAGNL…VDNLENAKKL (113 aa)). Residues 691–1051 (IKVDIDMKKL…YLQLISEVQK (361 aa)) adopt a coiled-coil conformation.

Belongs to the SMC family. Homodimer.

It is found in the cytoplasm. Its function is as follows. Required for chromosome condensation and partitioning. This is Chromosome partition protein Smc from Methanococcus voltae.